The following is a 230-amino-acid chain: ATP synthase subunit a (230 aa).

6 helical membrane-spanning segments follow: residues Leu16–Ile36, Trp73–Leu93, Thr106–Phe126, Leu142–Gly162, Leu165–Thr185, and Ile192–Cys212.

This sequence belongs to the ATPase A chain family. F-type ATPases have 2 components, CF(1) - the catalytic core - and CF(0) - the membrane proton channel. CF(1) has five subunits: alpha(3), beta(3), gamma(1), delta(1), epsilon(1). CF(0) has three main subunits: a, b and c.

Its subcellular location is the mitochondrion inner membrane. Mitochondrial membrane ATP synthase (F(1)F(0) ATP synthase or Complex V) produces ATP from ADP in the presence of a proton gradient across the membrane which is generated by electron transport complexes of the respiratory chain. F-type ATPases consist of two structural domains, F(1) - containing the extramembraneous catalytic core and F(0) - containing the membrane proton channel, linked together by a central stalk and a peripheral stalk. During catalysis, ATP synthesis in the catalytic domain of F(1) is coupled via a rotary mechanism of the central stalk subunits to proton translocation. Key component of the proton channel; it may play a direct role in the translocation of protons across the membrane. The protein is ATP synthase subunit a (ATP6) of Patiria pectinifera (Starfish).